We begin with the raw amino-acid sequence, 600 residues long: Probable tripeptidyl-peptidase SED4 (600 aa).

A signal peptide spans 1-22; it reads MVSFTLRAIGACLIGLPALITA. Positions 23–202 are cleaved as a propeptide — removed in mature form; sequence APTSHVSNGF…SVFTSDLEMT (180 aa). Asn-210 and Asn-281 each carry an N-linked (GlcNAc...) asparagine glycan. The region spanning 212–600 is the Peptidase S53 domain; sequence TITPDCIREL…FEKLSKLVLI (389 aa). Residues Glu-288 and Asp-292 each act as charge relay system in the active site. Asn-323 and Asn-404 each carry an N-linked (GlcNAc...) asparagine glycan. Ser-504 (charge relay system) is an active-site residue. Ca(2+) contacts are provided by Asp-546, Ile-547, Gly-579, and Asp-581.

It depends on Ca(2+) as a cofactor.

It is found in the secreted. It localises to the extracellular space. It carries out the reaction Release of an N-terminal tripeptide from a polypeptide.. In terms of biological role, secreted tripeptidyl-peptidase which degrades proteins at acidic pHs and is involved in virulence. This is Probable tripeptidyl-peptidase SED4 (SED4) from Trichophyton verrucosum (strain HKI 0517).